A 484-amino-acid chain; its full sequence is CUGBP Elav-like family member 2 (484 aa).

Necessary for nuclear export regions lie at residues 1 to 89 and 90 to 178; these read MNGA…PGMH and HPIQ…EGCS. RRM domains are found at residues 16–99, 108–188, and 399–477; these read IKTF…PADS, RKLF…FADT, and ANLF…LKRS. Positions 188 to 240 are necessary for splicing activity; the sequence is TQKDKEQRRLQQQLAQQMQQLNTATWGNLTGLGGLTPQYLALLQQATSSSNLG. Positions 347-399 are necessary for nuclear localization; that stretch reads GLTNGTAGTMDALTQAYSGIQQYAAAALPTLYSQSLLQQQSAAGSQKEGPEGA. Residues 426 to 484 are necessary for nuclear localization and splicing activity; sequence ISAKVFIDKQTNLSKCFGFVSYDNPVSAQAAIQAMNGFQIGMKRLKVQLKRSKNDSKPY.

Belongs to the CELF/BRUNOL family. In terms of tissue distribution, expressed in heart.

It is found in the nucleus. Its subcellular location is the cytoplasm. Its function is as follows. RNA-binding protein implicated in the regulation of several post-transcriptional events. May be involved in mRNA translation repression and stability. Mediates exon inclusion in TNNT2 pre-mRNA. In Gallus gallus (Chicken), this protein is CUGBP Elav-like family member 2 (CELF2).